We begin with the raw amino-acid sequence, 1228 residues long: ABC transporter B family member 16 (1228 aa).

The next 6 helical transmembrane spans lie at 22–42 (MGLG…LFFI), 69–89 (LAML…GYCW), 145–167 (LPNI…MLLW), 171–193 (IVGF…ALIG), 251–271 (GIAI…TWYG), and 283–303 (GTVS…GQAL). Residues 22–311 (MGLGLIGAVG…ALSNLKYFSE (290 aa)) form the ABC transmembrane type-1 1 domain. An ABC transporter 1 domain is found at 346 to 582 (VEFNNVKCKY…DGKYTSLVRL (237 aa)). 381 to 388 (GGSGSGKS) contacts ATP. Asparagine 529, asparagine 593, and asparagine 628 each carry an N-linked (GlcNAc...) asparagine glycan. Positions 658–946 (ALCGCLSASL…AGTMTTDLAK (289 aa)) constitute an ABC transmembrane type-1 2 domain. 2 helical membrane-spanning segments follow: residues 667–687 (LGGA…SVFF) and 700–720 (IYVL…ISQQ). Asparagine 755 is a glycosylation site (N-linked (GlcNAc...) asparagine). 2 helical membrane-spanning segments follow: residues 781–801 (LLVQ…VIAW) and 805–825 (IVMI…RVLL). The N-linked (GlcNAc...) asparagine glycan is linked to asparagine 827. The next 2 helical transmembrane spans lie at 881–901 (SWLA…TSAL) and 920–940 (FFEL…AGTM). An ABC transporter 2 domain is found at 981–1219 (ITFLNVDFAY…GPTGSYFSLV (239 aa)). Residue asparagine 1001 is glycosylated (N-linked (GlcNAc...) asparagine). 1016-1023 (GPSRSGKS) is an ATP binding site.

The protein belongs to the ABC transporter superfamily. ABCB family. Multidrug resistance exporter (TC 3.A.1.201) subfamily.

It is found in the membrane. This is ABC transporter B family member 16 (ABCB16) from Arabidopsis thaliana (Mouse-ear cress).